The primary structure comprises 97 residues: Large ribosomal subunit protein bL25 (97 aa).

This sequence belongs to the bacterial ribosomal protein bL25 family. In terms of assembly, part of the 50S ribosomal subunit; part of the 5S rRNA/L5/L18/L25 subcomplex. Contacts the 5S rRNA. Binds to the 5S rRNA independently of L5 and L18.

Its function is as follows. This is one of the proteins that binds to the 5S RNA in the ribosome where it forms part of the central protuberance. This Blochmanniella pennsylvanica (strain BPEN) protein is Large ribosomal subunit protein bL25.